Here is a 573-residue protein sequence, read N- to C-terminus: Cytosolic 5'-nucleotidase 1B (573 aa).

Residues 1 to 11 are compositionally biased toward basic residues; it reads MSQTSLKHKKK. Disordered stretches follow at residues 1 to 200 and 218 to 238; these read MSQT…PPTE and EPEY…EEDE. Residues 12-35 are compositionally biased toward basic and acidic residues; sequence NEPGMRYSKESLDAEKRKDSDKTG. Polar residues predominate over residues 60 to 73; sequence NQWSRTSRSPSTGA. The span at 93–105 shows a compositional bias: low complexity; sequence SSTTSRTSSASPS. Residues 115–136 are compositionally biased toward polar residues; that stretch reads TSEKSSIQQTPQNRPITQLESQ. Composition is skewed to basic and acidic residues over residues 161 to 174 and 182 to 194; these read WAHR…DLQL and DSRE…REYP. D428 acts as the Nucleophile in catalysis.

This sequence belongs to the 5'-nucleotidase type 3 family. Mg(2+) is required as a cofactor. As to expression, expressed at highest levels in testis. Also expressed in brain, skeletal muscle, kidney and heart.

Its subcellular location is the cytoplasm. The enzyme catalyses a ribonucleoside 5'-phosphate + H2O = a ribonucleoside + phosphate. The catalysed reaction is AMP + H2O = adenosine + phosphate. With respect to regulation, activated by ADP. Functionally, catalyzes the hydrolysis of nucleotide monophosphates, releasing inorganic phosphate and the corresponding nucleoside, AMP is the major substrate. In Mus musculus (Mouse), this protein is Cytosolic 5'-nucleotidase 1B (Nt5c1b).